A 280-amino-acid polypeptide reads, in one-letter code: Bis(5'-nucleosyl)-tetraphosphatase, symmetrical (280 aa).

This sequence belongs to the Ap4A hydrolase family.

It catalyses the reaction P(1),P(4)-bis(5'-adenosyl) tetraphosphate + H2O = 2 ADP + 2 H(+). Its function is as follows. Hydrolyzes diadenosine 5',5'''-P1,P4-tetraphosphate to yield ADP. The polypeptide is Bis(5'-nucleosyl)-tetraphosphatase, symmetrical (Escherichia coli O17:K52:H18 (strain UMN026 / ExPEC)).